A 66-amino-acid chain; its full sequence is Toxin BeM14 (66 aa).

The LCN-type CS-alpha/beta domain occupies 2 to 66 (RDAYIADDRN…IRKIPGEECR (65 aa)). 4 cysteine pairs are disulfide-bonded: C12-C65, C16-C36, C22-C46, and C26-C48.

It belongs to the long (4 C-C) scorpion toxin superfamily. Sodium channel inhibitor family. Alpha subfamily. As to expression, expressed by the venom gland.

It is found in the secreted. In terms of biological role, alpha toxins bind voltage-independently at site-3 of sodium channels (Nav) and inhibit the inactivation of the activated channels, thereby blocking neuronal transmission. Has paralytic activity in mice. This Mesobuthus eupeus (Lesser Asian scorpion) protein is Toxin BeM14.